Reading from the N-terminus, the 590-residue chain is MAAPPAKGNTEQSEEGDLPQLPVSPKPDDEQSRSQSPTQLQDSPEAGGEQEEEQAFLVSLYKFMKERHTPIERVPHLGFKQINLWKIYKAVEKLGAYELVTGRRLWKNVYDELGGSPGSTSAATCTRRHYERLVLPYVRHLKGEDDKPLPPTKPRKQYKMAKELRGDDGTTEKLKKAKDSEERRVEQTTPGKTKSDATGQTQLPCQGSSRDSTEQLGPVSGPSPPLTGASSCPEAYKRLLSSFYCKGAHGIMSPLAKKKLLAQVSKAEALQCQEEGCRHGARSPNKDIQDSPQNLRGPAENSEHQLTPREGLQAPGGSTRMEAQVGPCPTAPMFSGCFHAYPTEVLKPVSQHPRDFFSGLKDRVLLGPPGKEEGPTTKESHLVWGGDANHPSAFHKGSTRKRSFYPKPKACWVSPMAKVPTERPGAPSPHPSSPGLGSKRGLEEEGFAHGGKKLRAVSPFLKEVDSKETGGKPAAPGLAVSCLLGPTPGPTPPEAYRGTMLRCPLNFTGSADPLKGQASLPFSPLVIPAFPAHLLATTGSSPMAASLMHFPPTPYDAVLRNRLGPASSAWHMPPVTTYAAPHFFHLNTKL.

A disordered region spans residues 1–52 (MAAPPAKGNTEQSEEGDLPQLPVSPKPDDEQSRSQSPTQLQDSPEAGGEQEE). Residues 1 to 294 (MAAPPAKGNT…NKDIQDSPQN (294 aa)) form an interaction with SOX9 region. At Ser24 the chain carries Phosphoserine. The segment covering 33–42 (RSQSPTQLQD) has biased composition (polar residues). An ARID domain is found at 50–142 (QEEEQAFLVS…LVLPYVRHLK (93 aa)). Residues Lys80 and Lys89 each participate in a glycyl lysine isopeptide (Lys-Gly) (interchain with G-Cter in ubiquitin) cross-link. The segment at 141-229 (LKGEDDKPLP…SGPSPPLTGA (89 aa)) is disordered. The segment covering 160–186 (MAKELRGDDGTTEKLKKAKDSEERRVE) has biased composition (basic and acidic residues). Positions 187 to 210 (QTTPGKTKSDATGQTQLPCQGSSR) are enriched in polar residues. 2 positions are modified to phosphoserine: Ser253 and Ser283. Disordered stretches follow at residues 275-323 (EGCR…RMEA), 367-402 (GPPGKEEGPTTKESHLVWGGDANHPSAFHKGSTRKR), and 419-443 (VPTERPGAPSPHPSSPGLGSKRGLE). Residues 367–381 (GPPGKEEGPTTKESH) are compositionally biased toward basic and acidic residues. Residues Ser433 and Ser458 each carry the phosphoserine modification.

Interacts with SOX9. Interacts with ESR1. Interacts with RORC. Post-translationally, phosphorylated by MAPK14 on serine residues involving a TLR4 signaling pathway upon lipopolysaccharide (LPS) stimulation leading to its ubiquitination and proteasomal degradation. Ubiquitinated leading to proteasomal degradation; involving WWP1 linked to MAPK14-mediated phosphorylation upon LPS stimulation. Expressed in T cells (at protein level). Expressed at high levels in cartilage, heart, testis and bone.

It localises to the nucleus. Its function is as follows. DNA-binding protein that may regulate transcription and act as a repressor by binding to AT-rich stretches in the promoter region of target genes. May positively regulate chondrocyte-specific transcription such as of COL2A1 in collaboration with SOX9 and positively regulate histone H3 acetylation at chondrocyte-specific genes. May stimulate early-stage chondrocyte differentiation and inhibit later stage differention. Can repress ESR1-mediated transcriptional activation; proposed to act as corepressor for selective nuclear hormone receptors. As an RNA-binding protein, involved in the regulation of inflammatory response by stabilizing selective inflammation-related mRNAs, such as STAT3 and TBX21. Also stabilizes IL6 mRNA. Binds to stem loop structures located in the 3'UTRs of IL6, STAT3 and TBX21 mRNAs; at least for STAT3 prevents binding of ZC3H12A to the mRNA stem loop structure thus inhibiting its degradation activity. Contributes to elevated IL6 levels possibly implicated in autoimmunity processes. IL6-dependent stabilization of STAT3 mRNA may promote differentiation of naive CD4+ T-cells into T-helper Th17 cells. In CD4+ T-cells may also inhibit RORC-induced Th17 cell differentiation independently of IL6 signaling. Stabilization of TBX21 mRNA contributes to elevated interferon-gamma secretion in Th1 cells possibly implicated in the establishment of septic shock. Stabilizes TNFRSF4/OX40 mRNA by binding to the conserved stem loop structure in its 3'UTR; thereby competing with the mRNA-destabilizing functions of RC3H1 and endoribonuclease ZC3H12A. This Mus musculus (Mouse) protein is AT-rich interactive domain-containing protein 5A (Arid5a).